A 307-amino-acid polypeptide reads, in one-letter code: Ethylmalonyl-CoA decarboxylase (307 aa).

At Ala2 the chain carries N-acetylalanine. Lys217 is modified (N6-acetyllysine; alternate). Lys217 carries the post-translational modification N6-succinyllysine; alternate. Lys301 bears the N6-succinyllysine mark.

It belongs to the enoyl-CoA hydratase/isomerase family.

Its subcellular location is the cytoplasm. The protein resides in the cytosol. It catalyses the reaction (2S)-ethylmalonyl-CoA + H(+) = butanoyl-CoA + CO2. It carries out the reaction (S)-methylmalonyl-CoA + H(+) = propanoyl-CoA + CO2. The catalysed reaction is (2R)-ethylmalonyl-CoA + H(+) = butanoyl-CoA + CO2. Functionally, decarboxylates ethylmalonyl-CoA, a potentially toxic metabolite, to form butyryl-CoA, suggesting it might be involved in metabolite proofreading. Acts preferentially on (S)-ethylmalonyl-CoA but also has some activity on the (R)-isomer. Also has methylmalonyl-CoA decarboxylase activity at lower level. In Homo sapiens (Human), this protein is Ethylmalonyl-CoA decarboxylase (ECHDC1).